A 456-amino-acid polypeptide reads, in one-letter code: MHNTLPTLILGAGPAAIQLAVDISATGDARLGLYNRPSTKGERLKQYLALTPTLYLQGTGKAQATQKESSVTIDCYIDQLAQAVGDWQRLILAVPADHYYAVLQQIPWAALPQLKSVILLSSSMGSGLMVQNLLNAAGKRDVEVISLSSYYADTKYIRAETQDISANTQDINAGTQDIGAIQPYRAYTKAFKQRIYLANQWGNAGSAEMSWLTAVLARHHIDTLPCSNLLAAERFSITNYVHPPLALADTTLQALFYPEQRSQYLYKTQPEGPVCPAVIADLAGLADDYKRLLNRLGVEEINLLRFLNDDNYPVPASMVSRRWIDEFPQLPPLEQQYALFVRYTALLVDPYSTPDEQGRFYDFSAVKVATVYQDANALWHLPRVPLEDVHKLRTLLLLAGALDVVMPTAQRLLQRFQQALKAFIDRVGEEHCHPSLLGDDCDRQAAIIEQQWRSQT.

NADP(+) is bound by residues 12-15, 35-40, and Thr154; these read AGPA and NRPSTK. His242 serves as the catalytic Proton donor/acceptor.

This sequence belongs to the staphylopine dehydrogenase family. As to quaternary structure, homodimer.

The enzyme catalyses yersinopine + NADP(+) + H2O = (2S)-2-amino-4-{[(1S)-1-carboxy-2-(1H-imidazol-4-yl)ethyl]amino}butanoate + pyruvate + NADPH + H(+). Its function is as follows. Catalyzes the NADPH-dependent reductive condensation of pyruvate to the intermediate formed by the adjacently encoded enzyme y2836, namely (2S)-2-amino-4-{[(1S)-1-carboxy-2-(1H-imidazol-4-yl)ethyl]amino}butanoate, leading to the production of yersinopine. This is the last step in the biosynthesis of the metallophore yersinopine, which is involved in metal acquisition and thus enables bacterial growth inside the host, where metal access is limited. Therefore, this enzyme probably contributes to Yersinia virulence. Cannot use alpha-ketoglutarate in place of pyruvate, and displays only poor efficiency with oxaloacetate and glyoxylate. The chain is Yersinopine synthase from Yersinia pestis.